The chain runs to 363 residues: Protein-arginine kinase (363 aa).

The region spanning 24–254 (IVLSSRIRLA…AQLIEQERSA (231 aa)) is the Phosphagen kinase C-terminal domain. 27 to 31 (SSRIR) provides a ligand contact to ATP. Arg29, Arg40, and Arg86 each carry phosphoarginine; by autocatalysis. ATP-binding positions include His92, Arg125, and 176–180 (RASVM). Arg190 is modified (phosphoarginine; by autocatalysis). Position 207-212 (207-212 (RGIYGE)) interacts with ATP. Arg255, Arg269, and Arg272 each carry phosphoarginine; by autocatalysis. The RDXXRA motif of the pArg binding pocket involved in allosteric regulation signature appears at 337–342 (RDIRRA). Arg346 is subject to Phosphoarginine; by autocatalysis.

Belongs to the ATP:guanido phosphotransferase family. As to quaternary structure, interacts with CtsR in its autophosphorylated form. Interacts with McsA in nonstressed as well as in heat-stressed cells, whereas strongly interacts with ClpC only in nonstressed cells. Autophosphorylated on Arg residues. Phosphorylation on Arg-40 and Arg-86 are up-regulated upon stress conditions.

The protein localises to the cytoplasm. The catalysed reaction is L-arginyl-[protein] + ATP = N(omega)-phospho-L-arginyl-[protein] + ADP + H(+). Appears to be allosterically activated by the binding of pArg-containing polypeptides to the pArg-binding pocket localized in the C-terminal domain of McsB. The McsB kinase is inhibited in nonstressed cells by direct interaction with ClpC; upon heat exposure, the interaction of McsB with ClpC is dramatically decreased, leading to McsB release and activation during heat stress. Its kinase activity is counteracted by the protein-arginine-phosphatase YwlE in vivo. Requires McsA for full kinase activity. Functionally, catalyzes the specific phosphorylation of arginine residues in a large number of proteins. Is part of the bacterial stress response system, where it is involved in regulating the global heat shock repressor CtsR; phosphorylates arginine residues in the winged helix-turn-helix domain of CtsR, thereby preventing its binding to DNA and consequently inducing the expression of repressed genes. The transcriptional repressor HrcA, the chaperone GroEL, the unfoldase ClpC, together with several ribosomal subunits, represent other physiological targets of McsB under stress conditions. Protein arginine phosphorylation has a physiologically important role and is involved in the regulation of many critical cellular processes, such as protein homeostasis, motility, competence, and stringent and stress responses, by regulating gene expression and protein activity. Functions as an adapter whose kinase activity is required for ClpCP-mediated degradation of CtsR during heat stress. Is required for the delocalization of competence proteins from the cell poles, probably via a role in the degradation of anchor proteins. This Bacillus subtilis (strain 168) protein is Protein-arginine kinase.